The sequence spans 460 residues: MLSSKVVGDSHGQDSSYFLGWQEYEKNPFHESFNTSGIVQMGLAENQLSFDLIEKWLEEHPEVLGLKKNDESVFRQLALFQDYHGLPAFKDAMAKFMGKIRENKVKFDTNKMVLTAGSTSANETLMFCLANPGDAFLIPAPYYPGFDRDLKWRTGVEIVPIHCVSSNGYKITEDALEDAYERALKHNLNVKGVLITNPSNPLGTSTTREELDLLLTFTSTKKIHMVSDEIYSGTVFDSPEFTSVLEVAKDKNMGLDGKIHVVYSLSKDLGLPGFRVGLIYSNNEKVVSAATKMSSFGLISSQTQHLLANLLSDERFTTNYLEENKKRLRERKDRLVSGLKEAGISCLKSNAGLFCWVDLRHLLKSNTFEAEHSLWTKIVCEVGLNISPGSSCHCDEPGWFRVCFANMSDQTMEVAMDRVKGFVDNNNGGKQKRTMWDTRRRSLINKWVSKLSSVTCESER.

Substrate contacts are provided by Glu45 and Tyr83. The residue at position 267 (Lys267) is an N6-(pyridoxal phosphate)lysine.

It belongs to the class-I pyridoxal-phosphate-dependent aminotransferase family. Homodimer and heterodimer. In vivo, the relevance of heterodimerization with other ACS enzymes is however unsure. Interacts with GRF3. Pyridoxal 5'-phosphate serves as cofactor. In terms of processing, may be processed at its C-terminus. As to expression, expressed in roots.

The catalysed reaction is S-adenosyl-L-methionine = 1-aminocyclopropane-1-carboxylate + S-methyl-5'-thioadenosine + H(+). Its pathway is alkene biosynthesis; ethylene biosynthesis via S-adenosyl-L-methionine; ethylene from S-adenosyl-L-methionine: step 1/2. Functionally, 1-aminocyclopropane-1-carboxylate synthase (ACS) enzymes catalyze the conversion of S-adenosyl-L-methionine (SAM) into 1-aminocyclopropane-1-carboxylate (ACC), a direct precursor of ethylene. The sequence is that of 1-aminocyclopropane-1-carboxylate synthase 11 (ACS11) from Arabidopsis thaliana (Mouse-ear cress).